The primary structure comprises 180 residues: Acireductone dioxygenase (180 aa).

Residues H97, H99, E103, and H141 each contribute to the Fe(2+) site. Ni(2+) is bound by residues H97, H99, E103, and H141.

Belongs to the acireductone dioxygenase (ARD) family. In terms of assembly, monomer. Fe(2+) serves as cofactor. Requires Ni(2+) as cofactor.

It catalyses the reaction 1,2-dihydroxy-5-(methylsulfanyl)pent-1-en-3-one + O2 = 3-(methylsulfanyl)propanoate + CO + formate + 2 H(+). The catalysed reaction is 1,2-dihydroxy-5-(methylsulfanyl)pent-1-en-3-one + O2 = 4-methylsulfanyl-2-oxobutanoate + formate + 2 H(+). It participates in amino-acid biosynthesis; L-methionine biosynthesis via salvage pathway; L-methionine from S-methyl-5-thio-alpha-D-ribose 1-phosphate: step 5/6. In terms of biological role, catalyzes 2 different reactions between oxygen and the acireductone 1,2-dihydroxy-3-keto-5-methylthiopentene (DHK-MTPene) depending upon the metal bound in the active site. Fe-containing acireductone dioxygenase (Fe-ARD) produces formate and 2-keto-4-methylthiobutyrate (KMTB), the alpha-ketoacid precursor of methionine in the methionine recycle pathway. Ni-containing acireductone dioxygenase (Ni-ARD) produces methylthiopropionate, carbon monoxide and formate, and does not lie on the methionine recycle pathway. The sequence is that of Acireductone dioxygenase from Klebsiella pneumoniae subsp. pneumoniae (strain ATCC 700721 / MGH 78578).